Reading from the N-terminus, the 493-residue chain is Adenylyltransferase and sulfurtransferase uba4 (493 aa).

ATP-binding positions include glycine 99, aspartate 120, 127 to 131 (SNLHR), lysine 144, and 188 to 189 (DN). Zn(2+) contacts are provided by cysteine 237 and cysteine 240. The active-site Glycyl thioester intermediate; for adenylyltransferase activity is cysteine 254. Zn(2+) is bound by residues cysteine 316 and cysteine 319. A Rhodanese domain is found at 376–491 (INKEPTIIDV…WREQIDPDWP (116 aa)). Catalysis depends on cysteine 446, which acts as the Cysteine persulfide intermediate; for sulfurtransferase activity.

In the N-terminal section; belongs to the HesA/MoeB/ThiF family. UBA4 subfamily. Requires Zn(2+) as cofactor.

It is found in the cytoplasm. The protein localises to the cytosol. It catalyses the reaction [molybdopterin-synthase sulfur-carrier protein]-C-terminal Gly-Gly + ATP + H(+) = [molybdopterin-synthase sulfur-carrier protein]-C-terminal Gly-Gly-AMP + diphosphate. It carries out the reaction [molybdopterin-synthase sulfur-carrier protein]-C-terminal Gly-Gly-AMP + S-sulfanyl-L-cysteinyl-[cysteine desulfurase] + AH2 = [molybdopterin-synthase sulfur-carrier protein]-C-terminal-Gly-aminoethanethioate + L-cysteinyl-[cysteine desulfurase] + A + AMP + 2 H(+). It functions in the pathway tRNA modification; 5-methoxycarbonylmethyl-2-thiouridine-tRNA biosynthesis. The protein operates within cofactor biosynthesis; molybdopterin biosynthesis. Functionally, plays a central role in 2-thiolation of mcm(5)S(2)U at tRNA wobble positions of cytosolic tRNA(Lys), tRNA(Glu) and tRNA(Gln). Also essential during biosynthesis of the molybdenum cofactor. Acts by mediating the C-terminal thiocarboxylation of sulfur carriers urm1 and mocs2a. Its N-terminus first activates urm1 and mocs2a as acyl-adenylates (-COAMP), then the persulfide sulfur on the catalytic cysteine is transferred to urm1 and mocs2a to form thiocarboxylation (-COSH) of their C-terminus. The reaction probably involves hydrogen sulfide that is generated from the persulfide intermediate and that acts as a nucleophile towards urm1 and mocs2a. Subsequently, a transient disulfide bond is formed. Does not use thiosulfate as sulfur donor; nfs1 probably acting as a sulfur donor for thiocarboxylation reactions. This is Adenylyltransferase and sulfurtransferase uba4 from Aspergillus fumigatus (strain CBS 144.89 / FGSC A1163 / CEA10) (Neosartorya fumigata).